Reading from the N-terminus, the 333-residue chain is SPbeta prophage-derived recombinase-like protein YomM (333 aa).

Positions glutamate 30–glutamate 113 constitute a Core-binding (CB) domain. Residues tyrosine 142–phenylalanine 332 enclose the Tyr recombinase domain. Residues arginine 180, lysine 211, histidine 281, and histidine 308 contribute to the active site. The active-site O-(3'-phospho-DNA)-tyrosine intermediate is tyrosine 319.

It belongs to the 'phage' integrase family.

This chain is SPbeta prophage-derived recombinase-like protein YomM (yomM), found in Bacillus subtilis (strain 168).